Consider the following 316-residue polypeptide: Tyrosine recombinase XerD (316 aa).

The region spanning 4 to 97 is the Core-binding (CB) domain; it reads AALQTQLQGY…AVRGLHRFAV (94 aa). The region spanning 118 to 309 is the Tyr recombinase domain; the sequence is RLPKSLTVDE…TVQALREVWA (192 aa). Active-site residues include Arg162, Lys186, His261, Arg264, and His287. Tyr296 (O-(3'-phospho-DNA)-tyrosine intermediate) is an active-site residue.

It belongs to the 'phage' integrase family. XerD subfamily. In terms of assembly, forms a cyclic heterotetrameric complex composed of two molecules of XerC and two molecules of XerD.

It localises to the cytoplasm. Site-specific tyrosine recombinase, which acts by catalyzing the cutting and rejoining of the recombining DNA molecules. The XerC-XerD complex is essential to convert dimers of the bacterial chromosome into monomers to permit their segregation at cell division. It also contributes to the segregational stability of plasmids. The polypeptide is Tyrosine recombinase XerD (Mycobacterium leprae (strain TN)).